The sequence spans 407 residues: Elongation factor Tu (407 aa).

Positions 10–217 (KPHVNVGTIG…TLDEYIPEPE (208 aa)) constitute a tr-type G domain. A G1 region spans residues 19–26 (GHVDHGKT). 19–26 (GHVDHGKT) provides a ligand contact to GTP. Threonine 26 contributes to the Mg(2+) binding site. The G2 stretch occupies residues 60 to 64 (GITIA). A G3 region spans residues 81–84 (DCPG). Residues 81 to 85 (DCPGH) and 136 to 139 (NKAD) each bind GTP. A G4 region spans residues 136-139 (NKAD). The tract at residues 184–186 (SAL) is G5.

Belongs to the TRAFAC class translation factor GTPase superfamily. Classic translation factor GTPase family. EF-Tu/EF-1A subfamily. In terms of assembly, monomer.

It is found in the cytoplasm. It catalyses the reaction GTP + H2O = GDP + phosphate + H(+). GTP hydrolase that promotes the GTP-dependent binding of aminoacyl-tRNA to the A-site of ribosomes during protein biosynthesis. This Teredinibacter turnerae (strain ATCC 39867 / T7901) protein is Elongation factor Tu.